The chain runs to 122 residues: Large ribosomal subunit protein uL14 (122 aa).

It belongs to the universal ribosomal protein uL14 family. In terms of assembly, part of the 50S ribosomal subunit. Forms a cluster with proteins L3 and L19. In the 70S ribosome, L14 and L19 interact and together make contacts with the 16S rRNA in bridges B5 and B8.

Functionally, binds to 23S rRNA. Forms part of two intersubunit bridges in the 70S ribosome. This Acidovorax sp. (strain JS42) protein is Large ribosomal subunit protein uL14.